A 469-amino-acid chain; its full sequence is Glutamate--tRNA ligase (469 aa).

Positions 9–19 match the 'HIGH' region motif; that stretch reads PSPTGFLHVGG. Cys-98, Cys-100, Cys-125, and Asp-127 together coordinate Zn(2+). The 'KMSKS' region motif lies at 236–240; that stretch reads KLSKR. An ATP-binding site is contributed by Lys-239.

Belongs to the class-I aminoacyl-tRNA synthetase family. Glutamate--tRNA ligase type 1 subfamily. As to quaternary structure, monomer. Zn(2+) serves as cofactor.

It is found in the cytoplasm. It carries out the reaction tRNA(Glu) + L-glutamate + ATP = L-glutamyl-tRNA(Glu) + AMP + diphosphate. In terms of biological role, catalyzes the attachment of glutamate to tRNA(Glu) in a two-step reaction: glutamate is first activated by ATP to form Glu-AMP and then transferred to the acceptor end of tRNA(Glu). This chain is Glutamate--tRNA ligase, found in Shewanella halifaxensis (strain HAW-EB4).